Consider the following 438-residue polypeptide: MAEDVSSTAPSPRGCADGRDADPTEEQMAQTQRNDQDQFECQELLECQVQVGAPDEEEEEEEDSGLVAEAEAVAAGWMLHFLCLSLCRAFRDGRSEDFRRTRNSAEAIIHGLSSLTACQLRTIYICQFLTRIAAGKTLDAQFENDERITPLESALMIWGSIEKEHDKLHEEIQNLIKIPAIAVCMENGNFKEAEEVFERIFGDPNSHMPFKSKLLMIISQKDTFHSFFQHFSYYHMMEKIKSYVNYVLSEKSSTFLMKAAAKVVESKRTRTITSQDKPSGNDVEMETEANLDTRKSVSDKQSAVTESSEGTVSLLRSHKNLFLSKLQHGTQQQDLNKKERRVGTPQSTKKKKESRRATESRIPVSKSQPVTPEKHRARKRQAWLWEEDKNLRSGVRKYGEGNWSKILLHYKFNNRTSVMLKDRWRTMKKLKLISSDSE.

A compositionally biased stretch (polar residues) spans 1 to 10; the sequence is MAEDVSSTAP. The interval 1-36 is disordered; sequence MAEDVSSTAPSPRGCADGRDADPTEEQMAQTQRNDQ. Ala-2 is subject to N-acetylalanine. Ser-11 bears the Phosphoserine mark. A TRFH dimerization region spans residues 58 to 268; sequence EEEEEDSGLV…AAAKVVESKR (211 aa). Residue Lys-213 forms a Glycyl lysine isopeptide (Lys-Gly) (interchain with G-Cter in SUMO2) linkage. Position 219 is a phosphoserine; by ATM (Ser-219). Positions 265-378 are interaction with RLIM; the sequence is ESKRTRTITS…PVTPEKHRAR (114 aa). Residues 268–311 form a disordered region; sequence RTRTITSQDKPSGNDVEMETEANLDTRKSVSDKQSAVTESSEGT. The span at 299 to 311 shows a compositional bias: polar residues; that stretch reads DKQSAVTESSEGT. Lys-325 participates in a covalent cross-link: Glycyl lysine isopeptide (Lys-Gly) (interchain with G-Cter in SUMO2). The tract at residues 326-375 is disordered; sequence LQHGTQQQDLNKKERRVGTPQSTKKKKESRRATESRIPVSKSQPVTPEKH. The short motif at 337-356 is the Nuclear localization signal element; it reads KKERRVGTPQSTKKKKESRR. Residue Lys-366 forms a Glycyl lysine isopeptide (Lys-Gly) (interchain with G-Cter in SUMO2) linkage. An HTH myb-type domain is found at 375-432; sequence HRARKRQAWLWEEDKNLRSGVRKYGEGNWSKILLHYKFNNRTSVMLKDRWRTMKKLKL. Residues 403–428 constitute a DNA-binding region (H-T-H motif); it reads WSKILLHYKFNNRTSVMLKDRWRTMK.

Homodimer; can contain both isoforms. Found in a complex with POT1; TINF2 and TNKS1. Interacts with ATM, TINF2, TNKS1, TNKS2, PINX1, NEK2 and MAPRE1. Component of the shelterin complex (telosome) composed of TERF1, TERF2, TINF2, TERF2IP ACD and POT1. Interacts with RLIM (via N-terminus). Interacts with FBXO4. Interaction with TINF2 protects against interaction with FBXO4 and subsequent polyubiquitination and proteasomal degradation. Interacts with GNL3L; this interaction promotes homodimerization. Interacts with TIN2. Interactions with GNL3L and TIN2 are mutually exclusive. Interacts with RTEL1. Interacts with CCDC79/TERB1. Post-translationally, phosphorylated preferentially on Ser-219 in an ATM-dependent manner in response to ionizing DNA damage. ADP-ribosylation by TNKS1 or TNKS2 diminishes its ability to bind to telomeric DNA. In terms of processing, ubiquitinated by RLIM/RNF12, leading to its degradation by the proteasome. Ubiquitinated by a SCF (SKP1-CUL1-F-box protein) ubiquitin-protein ligase complex, leading to its degradation by the proteasome.

The protein resides in the nucleus. The protein localises to the chromosome. It is found in the telomere. Its subcellular location is the cytoplasm. It localises to the cytoskeleton. The protein resides in the spindle. In terms of biological role, binds the telomeric double-stranded 5'-TTAGGG-3' repeat and negatively regulates telomere length. Involved in the regulation of the mitotic spindle. Component of the shelterin complex (telosome) that is involved in the regulation of telomere length and protection. Shelterin associates with arrays of double-stranded 5'-TTAGGG-3' repeats added by telomerase and protects chromosome ends; without its protective activity, telomeres are no longer hidden from the DNA damage surveillance and chromosome ends are inappropriately processed by DNA repair pathways. This chain is Telomeric repeat-binding factor 1 (TERF1), found in Cricetulus griseus (Chinese hamster).